The primary structure comprises 421 residues: 4-hydroxy-3-methylbut-2-en-1-yl diphosphate synthase (flavodoxin) (421 aa).

The [4Fe-4S] cluster site is built by C311, C314, C357, and E364.

Belongs to the IspG family. The cofactor is [4Fe-4S] cluster.

The enzyme catalyses (2E)-4-hydroxy-3-methylbut-2-enyl diphosphate + oxidized [flavodoxin] + H2O + 2 H(+) = 2-C-methyl-D-erythritol 2,4-cyclic diphosphate + reduced [flavodoxin]. Its pathway is isoprenoid biosynthesis; isopentenyl diphosphate biosynthesis via DXP pathway; isopentenyl diphosphate from 1-deoxy-D-xylulose 5-phosphate: step 5/6. Converts 2C-methyl-D-erythritol 2,4-cyclodiphosphate (ME-2,4cPP) into 1-hydroxy-2-methyl-2-(E)-butenyl 4-diphosphate. This Xanthomonas campestris pv. campestris (strain 8004) protein is 4-hydroxy-3-methylbut-2-en-1-yl diphosphate synthase (flavodoxin).